Reading from the N-terminus, the 555-residue chain is CTP synthase (555 aa).

Positions 1-271 (MVKRGKKTKY…DDKLAELFNI (271 aa)) are amidoligase domain. Residue serine 19 participates in CTP binding. Residue serine 19 participates in UTP binding. ATP-binding positions include 20–25 (SLGKGL) and aspartate 77. Mg(2+)-binding residues include aspartate 77 and glutamate 145. Residues 152 to 154 (DIE), 192 to 197 (KTKPTQ), and lysine 228 each bind CTP. UTP contacts are provided by residues 192–197 (KTKPTQ) and lysine 228. Positions 297 to 537 (RIGIVGKYVE…VKAALEHRDA (241 aa)) constitute a Glutamine amidotransferase type-1 domain. Glycine 358 serves as a coordination point for L-glutamine. Cysteine 385 serves as the catalytic Nucleophile; for glutamine hydrolysis. Residues 386–389 (LGLQ), glutamate 409, and arginine 466 contribute to the L-glutamine site. Catalysis depends on residues histidine 510 and glutamate 512. The interval 535-555 (RDAQQRQPPAEVKKLAVGKNG) is disordered.

Belongs to the CTP synthase family. In terms of assembly, homotetramer.

The catalysed reaction is UTP + L-glutamine + ATP + H2O = CTP + L-glutamate + ADP + phosphate + 2 H(+). It carries out the reaction L-glutamine + H2O = L-glutamate + NH4(+). It catalyses the reaction UTP + NH4(+) + ATP = CTP + ADP + phosphate + 2 H(+). It participates in pyrimidine metabolism; CTP biosynthesis via de novo pathway; CTP from UDP: step 2/2. Its activity is regulated as follows. Allosterically activated by GTP, when glutamine is the substrate; GTP has no effect on the reaction when ammonia is the substrate. The allosteric effector GTP functions by stabilizing the protein conformation that binds the tetrahedral intermediate(s) formed during glutamine hydrolysis. Inhibited by the product CTP, via allosteric rather than competitive inhibition. Functionally, catalyzes the ATP-dependent amination of UTP to CTP with either L-glutamine or ammonia as the source of nitrogen. Regulates intracellular CTP levels through interactions with the four ribonucleotide triphosphates. This chain is CTP synthase, found in Anaeromyxobacter dehalogenans (strain 2CP-1 / ATCC BAA-258).